The sequence spans 2025 residues: MDNFAEGDFTVADYALLEDCPHVDDCVFAAEFMSNDYVRVTQLYCDGVGVQYKDYIQSERNLEFDICSIWCSKPISVLQDYCDAIKINIFWPLLFQHQNSSVISRLHPCVDANNSRASEINLKKLQHLELMEDIVDLAKKVANDSFLIGGLLRIGCKIENKILAMEEALNWIKYAGDVTILTKLGSIDNCWPMLSIFFTEYKYHITKIVMEDCNLLEELKTQSCMDCIEEGELMKMKGNEEFSKERFDIAIIYYTRAIEYRPENYLLYGNRALCFLRTGQFRNALGDGKRATILKNTWPKGHYRYCDALSMLGEYDWALQANIKAQKLCKNDPEGIKDLIQQHVKLQKQIEDLQGRTANKDPIKAFYENRAYTPRSLSAPIFTTSLNFVEKERDFRKINHEMANGGNQNLKVADEALKVDDCDCHPEFSPPSSQPPKHKGKQKSRNNESEKFSSSSPLTLPADLKNILEKQFSKSSRAAHQDFANIMKMLRSLIQDGYMALLEQRCRSAAQAFTELLNGLDPQKIKQLNLAMINYVLVVYGLAISLLGIGQPEELSEAENQFKRIIEHYPSEGLDCLAYCGIGKVYLKKNRFLEALNHFEKARTLIYRLPGVLTWPTSNVIIEESQPQKIKMLLEKFVEECKFPPVPDAICCYQKCHGYSKIQIYITDPDFKGFIRISCCQYCKIEFHMNCWKKLKTTTFNDKIDKDFLQGICLTPDCEGVISKIIIFSSGGEVKCEFEHKVIKEKVPPRPILKQKCSSLEKLRLKEDKKLKRKIQKKEAKKLAQERMEEDLRESNPPKNEEQKETVDNVQRCQFLDDRILQCIKQYADKIKSGIQNTAMLLKELLSWKVLSTEDYTTCFSSRNFLNEAVDYVIRHLIQENNRVKTRIFLHVLSELKEVEPKLAAWIQKLNSFGLDATGTFFSRYGASLKLLDFSIMTFLWNEKYGHKLDSIEGKQLDYFSEPASLKEARCLIWLLEEHRDKFPALHSALDEFFDIMDSRCTVLRKQDSGEAPFSSTKVKNKSKKKKPKDSKPMLVGSGTTSVTSNNEIITSSEDHSNRNSDSAGPFAVPDHLRQDVEEFEALYDQHSNEYVVRNKKLWDMNPKQKCSTLYDYFSQFLEEHGPLDMSNKMFSAEYEFFPEETRQILEKAGGLKPFLLGCPRFVVIDNCIALKKVASRLKKKRKKKNIKTKVEEISKAGEYVRVKLQLNPAAREFKPDVKSKPVSDSSSAPAFENVKPKPVSANSPKPACEDVKAKPVSDNSSRQVSEDGQPKGVSSNSPKPGSEDANYKRVSCNSPKPVLEDVKPTYWAQSHLVTGYCTYLPFQRFDITQTPPAYINVLPGLPQYTSIYTPLASLSPEYQLPRSVPVVPSFVANDRADKNAAAYFEGHHLNAENVAGHQIASETQILEGSLGISVKSHCSTGDAHTVLSESNRNDEHCGNSNNKCEVIPESTSAVTNIPHVQMVAIQVSWNIIHQEVNTEPYNPFEERQGEISRIEKEHQVLQDQLQEVYENYEQIKLKGLEETRDLEEKLKRHLEENKISKTELDWFLQDLEREIKKWQQEKKEIQERLKSLKKKIKKVSNASEMYTQKNDGKEKEHELHLDQSLEISNTLTNEKMKIEEYIKKGKEDYEESHQRAVAAEVSVLENWKESEVYKLQIMESQAEAFLKKLGLISRDPAAYPDMESDIRSWELFLSNVTKEIEKAKSQFEEQIKAIKNGSRLSELSKVQISELSFPACNTVHPELLPESSGDDGQGLVTSASDVTGNHAALHRDPSVFSAGDSPGEAPSALLPGPPPGQPEATQLTGPKRAGQAALSERSPVADRKQPVPPGRAARSSQSPKKPFNSIIEHLSVVFPCYNSTELAGFIKKVRSKNKNSLSGLSIDEIVQRVTEHILDEQKKKKPNPGKDKRTYEPSSATPVTRSSQGSPSVVVAPSPKTKGQKAEDVPVRIALGASSCEICHEVFKSKNVRVLKCGHKYHKGCFKQWLKGQSACPACQGRDLLTEESPSGRGWPSQNQELPSCSSR.

The interaction with POLG stretch occupies residues 1-230; sequence MDNFAEGDFT…TQSCMDCIEE (230 aa). TPR repeat units lie at residues 231–264 and 266–298; these read GELMKMKGNEEFSKERFDIAIIYYTRAIEYRPEN and LLYGNRALCFLRTGQFRNALGDGKRATILKNTW. Position 378 is a phosphoserine; by PKB/AKT2 (Ser378). Residues 423 to 458 form a disordered region; the sequence is DCHPEFSPPSSQPPKHKGKQKSRNNESEKFSSSSPL. TPR repeat units follow at residues 536–572 and 576–609; these read VLVVYGLAISLLGIGQPEELSEAENQFKRIIEHYPSE and CLAYCGIGKVYLKKNRFLEALNHFEKARTLIYRL. The segment at 786–805 is disordered; that stretch reads ERMEEDLRESNPPKNEEQKE. Residues 793–805 are compositionally biased toward basic and acidic residues; it reads RESNPPKNEEQKE. Ser1009 carries the post-translational modification Phosphoserine. 4 disordered regions span residues 1012–1068, 1215–1295, 1773–1842, and 1894–1944; these read APFS…GPFA, KPDV…SCNS, DPSV…SPKK, and ILDE…QKAE. Over residues 1019-1029 the composition is skewed to basic residues; the sequence is VKNKSKKKKPK. Residues 1038-1052 show a composition bias toward polar residues; that stretch reads SGTTSVTSNNEIITS. Ser1061 bears the Phosphoserine mark. Residues 1894–1912 show a composition bias toward basic and acidic residues; the sequence is ILDEQKKKKPNPGKDKRTY. Residues 1913-1928 are compositionally biased toward polar residues; it reads EPSSATPVTRSSQGSP. Residues 1957–1997 form an RING-type zinc finger; that stretch reads CEICHEVFKSKNVRVLKCGHKYHKGCFKQWLKGQSACPACQ. Positions 2004-2025 are disordered; the sequence is EESPSGRGWPSQNQELPSCSSR. Polar residues predominate over residues 2013 to 2025; that stretch reads PSQNQELPSCSSR.

In terms of assembly, interacts (when phosphorylated on Ser-378) with AKT1, AKT2 and AKT3 (when phosphorylated). Interacts with CIT. Interacts with POLG. Interacts with HSP70. Interacts with SMURF2. Phosphorylation on Ser-378 by Akt is required for ubiquitin ligase activity. In terms of processing, proteolytically cleaved into differently sized N- and C-terminal fragments. Found in all tissues examined.

It is found in the nucleus. Its subcellular location is the cytoplasm. The protein resides in the golgi apparatus. It carries out the reaction S-ubiquitinyl-[E2 ubiquitin-conjugating enzyme]-L-cysteine + [acceptor protein]-L-lysine = [E2 ubiquitin-conjugating enzyme]-L-cysteine + N(6)-ubiquitinyl-[acceptor protein]-L-lysine.. The protein operates within protein modification; protein ubiquitination. Its function is as follows. E3 ubiquitin-protein ligase which catalyzes the formation of 'Lys-48'-polyubiquitin chains. Mediates the ubiquitination and subsequent degradation of phosphorylated Akt (AKT1, AKT2 and AKT3) in the nucleus. Acts as a terminal regulator of Akt signaling after activation; its phosphorylation by Akt, which is a prerequisite for ubiquitin ligase activity, suggests the existence of a regulation mechanism required to control Akt levels after activation. Positively regulates TGFB1-induced epithelial-mesenchymal transition and myofibroblast differentiation by mediating the ubiquitination and subsequent degradation of SMURF2. Regulates neuronal differentiation by regulating actin remodeling and Golgi organization via a signaling cascade involving RHOA, CIT and ROCK. Inhibits cell proliferation. In Homo sapiens (Human), this protein is E3 ubiquitin-protein ligase TTC3 (TTC3).